We begin with the raw amino-acid sequence, 40 residues long: Photosystem II reaction center protein J (40 aa).

A helical membrane pass occupies residues 8–28; it reads IPLWVIGTVAGILVIGLIGIF.

This sequence belongs to the PsbJ family. PSII is composed of 1 copy each of membrane proteins PsbA, PsbB, PsbC, PsbD, PsbE, PsbF, PsbH, PsbI, PsbJ, PsbK, PsbL, PsbM, PsbT, PsbX, PsbY, PsbZ, Psb30/Ycf12, at least 3 peripheral proteins of the oxygen-evolving complex and a large number of cofactors. It forms dimeric complexes.

The protein resides in the plastid. Its subcellular location is the chloroplast thylakoid membrane. Functionally, one of the components of the core complex of photosystem II (PSII). PSII is a light-driven water:plastoquinone oxidoreductase that uses light energy to abstract electrons from H(2)O, generating O(2) and a proton gradient subsequently used for ATP formation. It consists of a core antenna complex that captures photons, and an electron transfer chain that converts photonic excitation into a charge separation. In Lepidium virginicum (Virginia pepperweed), this protein is Photosystem II reaction center protein J.